Consider the following 306-residue polypeptide: Uricase (306 aa).

Active-site charge relay system residues include K5 and T65. Positions 65, 66, 175, 192, 240, 241, and 267 each coordinate urate. The tract at residues 281-306 (AKVLREPPRPTGYQQFSMDRSDLEEQ) is disordered.

It belongs to the uricase family.

It catalyses the reaction urate + O2 + H2O = 5-hydroxyisourate + H2O2. It functions in the pathway purine metabolism; urate degradation; (S)-allantoin from urate: step 1/3. Its function is as follows. Catalyzes the oxidation of uric acid to 5-hydroxyisourate, which is further processed to form (S)-allantoin. In Halalkalicoccus jeotgali (strain DSM 18796 / CECT 7217 / JCM 14584 / KCTC 4019 / B3), this protein is Uricase.